We begin with the raw amino-acid sequence, 422 residues long: Serine hydroxymethyltransferase (422 aa).

(6S)-5,6,7,8-tetrahydrofolate is bound by residues L118 and 122-124; that span reads GHL. K227 bears the N6-(pyridoxal phosphate)lysine mark. (6S)-5,6,7,8-tetrahydrofolate-binding positions include E243 and 351 to 353; that span reads SPF.

This sequence belongs to the SHMT family. Homodimer. Requires pyridoxal 5'-phosphate as cofactor.

It localises to the cytoplasm. It carries out the reaction (6R)-5,10-methylene-5,6,7,8-tetrahydrofolate + glycine + H2O = (6S)-5,6,7,8-tetrahydrofolate + L-serine. Its pathway is one-carbon metabolism; tetrahydrofolate interconversion. The protein operates within amino-acid biosynthesis; glycine biosynthesis; glycine from L-serine: step 1/1. Catalyzes the reversible interconversion of serine and glycine with tetrahydrofolate (THF) serving as the one-carbon carrier. This reaction serves as the major source of one-carbon groups required for the biosynthesis of purines, thymidylate, methionine, and other important biomolecules. Also exhibits THF-independent aldolase activity toward beta-hydroxyamino acids, producing glycine and aldehydes, via a retro-aldol mechanism. The chain is Serine hydroxymethyltransferase from Kosmotoga olearia (strain ATCC BAA-1733 / DSM 21960 / TBF 19.5.1).